We begin with the raw amino-acid sequence, 325 residues long: UDP-N-acetylglucosamine transporter ROCK1 (325 aa).

Topologically, residues 1–13 are cytoplasmic; sequence MATANGAKSPSSM. The chain crosses the membrane as a helical span at residues 14–34; it reads GPKVLFYSILLTLQYGAQPLI. Topologically, residues 35-42 are lumenal; that stretch reads SKRCIRKD. The chain crosses the membrane as a helical span at residues 43 to 63; sequence VIVTSSVLTCEIVKVICALIL. At 64 to 109 the chain is on the cytoplasmic side; the sequence is MARNGSLKGLAKEWTLMGSLTASGLPAAIYALQNSLLQISYRSLDS. The helical transmembrane segment at 110 to 130 threads the bilayer; sequence LTFSILNQTKIFFTAFFTFII. Over 131–135 the chain is Lumenal; the sequence is LRQKQ. A helical transmembrane segment spans residues 136 to 156; that stretch reads SILQIGALCLLIMAAVLLSVG. At 157 to 171 the chain is on the cytoplasmic side; that stretch reads EGSNKDSSGINADQK. Residues 172 to 192 form a helical membrane-spanning segment; sequence LFYGIIPVLAASVLSGLASSL. At 193–203 the chain is on the lumenal side; the sequence is CQWASQVKKHS. Residues 204–224 traverse the membrane as a helical segment; it reads SYLMTVEMSIVGSLCLLVSTL. Residues 225–241 lie on the Cytoplasmic side of the membrane; that stretch reads KSPDGEAIKKYGFFHGW. The chain crosses the membrane as a helical span at residues 242-262; sequence TALTLVPVISNALGGILVGLV. Over 263–270 the chain is Lumenal; it reads TSHAGGVR. A helical transmembrane segment spans residues 271 to 291; the sequence is KGFVIVSALLVTALLQFAFEG. Topologically, residues 292 to 325 are cytoplasmic; it reads KPPSSYCLVALPLVMSSISMYQKYPYIDKKKKKV.

This sequence belongs to the nucleotide-sugar transporter family. CMP-Sialate:CMP antiporter (TC 2.A.7.12) subfamily. Expressed in roots, cotyledons, leaves, stems, flowers and siliques.

Its subcellular location is the endoplasmic reticulum membrane. Its function is as follows. Mediates the transport of UDP-linked acetylated hexosamines across the endoplasmic reticulum (ER) membrane. Facilitates UDP-N-acetylglucosamine (UDP-GlcNAc) and UDP-N-acetylgalactosamine (UDP-GalNAc) transport. Regulates the cytokinin signal in meristematic cells through modulating activity of cytokinin oxidases/dehydrogenases. Part of the ER quality control system, which determines the fate of aberrant proteins in the secretory pathway. The sequence is that of UDP-N-acetylglucosamine transporter ROCK1 from Arabidopsis thaliana (Mouse-ear cress).